Here is a 199-residue protein sequence, read N- to C-terminus: 5'-deoxynucleotidase YfbR (199 aa).

Residues 18 to 19 and His33 each bind substrate; that span reads RW. An HD domain is found at 30–142; it reads VSEHSLQVAM…VKQADALCAY (113 aa). Residues His33, His68, and Asp69 each coordinate a divalent metal cation. Substrate is bound by residues Asp69, 77-80, and Asp137; that span reads DLPT. Asp137 is a binding site for a divalent metal cation.

The protein belongs to the 5DNU family. As to quaternary structure, homodimer. A divalent metal cation is required as a cofactor.

It is found in the cytoplasm. The catalysed reaction is a 2'-deoxyribonucleoside 5'-phosphate + H2O = a 2'-deoxyribonucleoside + phosphate. Functionally, catalyzes the strictly specific dephosphorylation of 2'-deoxyribonucleoside 5'-monophosphates. The sequence is that of 5'-deoxynucleotidase YfbR from Escherichia coli O45:K1 (strain S88 / ExPEC).